The chain runs to 584 residues: ATP synthase subunit alpha, mitochondrial (584 aa).

The N-terminal 24 residues, 1 to 24, are a transit peptide targeting the mitochondrion; sequence MRRFGSKFASGLASRCALACPLAS. ATP-binding positions include 207–214 and glutamine 464; that span reads DRQTGKTS.

It belongs to the ATPase alpha/beta chains family. F-type ATPases have 2 components, F(1) - the catalytic core - and F(o) - the membrane proton channel. F(1) has five subunits: alpha(3), beta(3), gamma(1), delta(1), epsilon(1), plus the additional subunit P18 (Tb427.05.1710) that is not present in F(1)F(o) ATP synthase from metazoa. Subunit P18 (Tb927.5.1710) interacts with the alpha subunit with a 1:1 stoichiometry; the interaction is direct. Subunit gamma is part of the central stalk. F(o) has three main subunits: a, b and c. The trypanosomal ATPase complex contains additional subunits that are not present in the F(1)F(o) ATP synthase from metazoa.

The protein localises to the mitochondrion. Its subcellular location is the mitochondrion inner membrane. Functionally, mitochondrial membrane ATP synthase (F(1)F(o) ATP synthase) produces ATP from ADP in the presence of a proton gradient across the membrane which is generated by electron transport complexes of the respiratory chain. F-type ATPases consist of two structural domains, F(1) - containing the extramembraneous catalytic core, and F(o) - containing the membrane proton channel, linked together by a central stalk and a peripheral stalk. During catalysis, ATP synthesis in the catalytic domain of F(1) is coupled via a rotary mechanism of the central stalk subunits to proton translocation. Subunits alpha and beta form the catalytic core in F(1). Rotation of the central stalk against the surrounding alpha(3)beta(3) subunits leads to hydrolysis of ATP in three separate catalytic sites on the beta subunits. Subunit alpha does not bear the catalytic high-affinity ATP-binding sites. Contrary to the procyclic, insect form that requires F(1)F(o) ATP synthase for ATP synthesis, the bloodstream form relies on ATP hydrolysis by F(1)F(o) ATP synthase to maintain its mitochondrial membrane potential. The polypeptide is ATP synthase subunit alpha, mitochondrial (Trypanosoma brucei brucei).